The primary structure comprises 632 residues: Extracellular metalloproteinase 2 (632 aa).

Residues 1–19 (MHGLLLAGLAAALPLGVAG) form the signal peptide. The propeptide occupies 20 to 244 (LPARQQSGLS…VHNVVDYVAS (225 aa)). Asn270 carries N-linked (GlcNAc...) asparagine glycosylation. Zn(2+) is bound at residue His429. Residue Glu430 is part of the active site. His433 contributes to the Zn(2+) binding site.

This sequence belongs to the peptidase M36 family. It depends on Zn(2+) as a cofactor.

The protein resides in the secreted. Secreted metalloproteinase probably acting as a virulence factor. This Arthroderma benhamiae (Trichophyton mentagrophytes) protein is Extracellular metalloproteinase 2 (MEP2).